The following is a 923-amino-acid chain: Lysosomal acid alpha-glucosidase (923 aa).

The first 17 residues, 1-17, serve as a signal peptide directing secretion; it reads MKHQVLLPLLVTTAIIA. A propeptide spanning residues 18–36 is cleaved from the precursor; that stretch reads GSVGVYTHSKPLLGQSQDQ. N-linked (GlcNAc...) asparagine glycans are attached at residues Asn-65, Asn-405, and Asn-440. Asp-455 functions as the Nucleophile in the catalytic mechanism. Residue Glu-458 is part of the active site. Asp-585 serves as the catalytic Proton donor. N-linked (GlcNAc...) asparagine glycosylation is found at Asn-586, Asn-621, Asn-646, Asn-848, Asn-908, and Asn-912.

This sequence belongs to the glycosyl hydrolase 31 family.

It is found in the lysosome. Its subcellular location is the secreted. It catalyses the reaction Hydrolysis of terminal, non-reducing (1-&gt;4)-linked alpha-D-glucose residues with release of alpha-D-glucose.. Functionally, essential for the degradation of glycogen to glucose in lysosomes. Has both alpha-1,4 and alpha-1,6-glucosidase activity. The protein is Lysosomal acid alpha-glucosidase of Tetrahymena pyriformis.